Here is a 545-residue protein sequence, read N- to C-terminus: Glucose-6-phosphate isomerase (545 aa).

E351 (proton donor) is an active-site residue. Residues H382 and K510 contribute to the active site.

Belongs to the GPI family.

Its subcellular location is the cytoplasm. The enzyme catalyses alpha-D-glucose 6-phosphate = beta-D-fructose 6-phosphate. Its pathway is carbohydrate biosynthesis; gluconeogenesis. It functions in the pathway carbohydrate degradation; glycolysis; D-glyceraldehyde 3-phosphate and glycerone phosphate from D-glucose: step 2/4. Functionally, catalyzes the reversible isomerization of glucose-6-phosphate to fructose-6-phosphate. The polypeptide is Glucose-6-phosphate isomerase (Shewanella woodyi (strain ATCC 51908 / MS32)).